Consider the following 65-residue polypeptide: Small, acid-soluble spore protein 2 (65 aa).

Belongs to the alpha/beta-type SASP family.

SASP are bound to spore DNA. They are double-stranded DNA-binding proteins that cause DNA to change to an a-like conformation. They protect the DNA backbone from chemical and enzymatic cleavage and are thus involved in dormant spore's high resistance to UV light. In Bacillus cereus, this protein is Small, acid-soluble spore protein 2 (sasP-2).